Consider the following 352-residue polypeptide: Guanine nucleotide-binding protein alpha-7 subunit (352 aa).

G2 carries the N-myristoyl glycine lipid modification. The S-palmitoyl cysteine moiety is linked to residue C4. The G-alpha domain maps to 32–352 (RIIKLLLLGA…AKNLKSMGLC (321 aa)). The segment at 35–48 (KLLLLGAGESGKST) is G1 motif. GTP is bound by residues 40–47 (GAGESGKS), 174–180 (LRTRIKT), 199–203 (DVGGQ), 268–271 (NKKD), and A324. Positions 47 and 180 each coordinate Mg(2+). The segment at 172–180 (DLLRTRIKT) is G2 motif. The interval 195–204 (FRVIDVGGQR) is G3 motif. Positions 264–271 (ILFLNKKD) are G4 motif. The G5 motif stretch occupies residues 322–327 (TCATDT).

Belongs to the G-alpha family. G(i/o/t/z) subfamily. In terms of assembly, g proteins are composed of 3 units; alpha, beta and gamma. The alpha chain contains the guanine nucleotide binding site.

Its function is as follows. Guanine nucleotide-binding proteins (G proteins) are involved as modulators or transducers in various transmembrane signaling systems. This is Guanine nucleotide-binding protein alpha-7 subunit (gpa-7) from Caenorhabditis briggsae.